A 196-amino-acid polypeptide reads, in one-letter code: dCTP deaminase, dUMP-forming (196 aa).

DCTP-binding positions include 101–106 (KSSLGR), aspartate 119, 127–129 (TLE), glutamine 148, tyrosine 162, and glutamine 174. Glutamate 129 (proton donor/acceptor) is an active-site residue.

This sequence belongs to the dCTP deaminase family. In terms of assembly, homotrimer.

The enzyme catalyses dCTP + 2 H2O = dUMP + NH4(+) + diphosphate. It participates in pyrimidine metabolism; dUMP biosynthesis; dUMP from dCTP: step 1/1. Its function is as follows. Bifunctional enzyme that catalyzes both the deamination of dCTP to dUTP and the hydrolysis of dUTP to dUMP without releasing the toxic dUTP intermediate. The chain is dCTP deaminase, dUMP-forming from Thermobifida fusca (strain YX).